Reading from the N-terminus, the 249-residue chain is Transcription initiation factor TFIID subunit 9B (249 aa).

Met1 is subject to N-acetylmethionine. Ser147 is subject to Phosphoserine. Residues 148-171 (AVSSRPTTPPVAPPQAVSGPNKAA) are disordered. Thr172 is subject to Phosphothreonine. Ser175 is subject to Phosphoserine. Over residues 224–234 (VSSQNTATDSN) the composition is skewed to polar residues. Residues 224-249 (VSSQNTATDSNPLKRKHDDDDDNDTM) form a disordered region.

It belongs to the TAF9 family. In terms of assembly, binds TAF5 and TAF6. Component of TFIID and the TATA-binding protein-free TAF complex (TFTC). TFIID is composed of TATA binding protein (TBP) and a number of TBP-associated factors (TAFs). Binds N-terminal domain of p53/TP53 which is essential for transcription.

The protein localises to the nucleus. Essential for cell viability. TAF9 and TAF9B are involved in transcriptional activation as well as repression of distinct but overlapping sets of genes. May have a role in gene regulation associated with apoptosis. TAFs are components of the transcription factor IID (TFIID) complex, the TBP-free TAFII complex (TFTC), the PCAF histone acetylase complex and the STAGA transcription coactivator-HAT complex. TFIID or TFTC are essential for the regulation of RNA polymerase II-mediated transcription. The protein is Transcription initiation factor TFIID subunit 9B (Taf9b) of Mus musculus (Mouse).